A 320-amino-acid chain; its full sequence is MRSAQVYRWQIPMDAGMVLRDRRLKTRDGLYVCLREGEREGWGEISPLPGFSQETWEEAQIVLLAWVNNWLAGDGELPQMPSVAFGVSCALAELADTLPQAANYRAAPLCNGDPDDLILKLADMPGEKVAKVKVGLYEAVRDGMVVNLLLEAIPDLHLRLDANRAWTPLKGQQFAKYVNPDYRHRIAFLEEPCKTRDDSRAFARETGIAIAWDESLREPDFAFVAEEGVRAVVIKPTLTGSLEKVREQVQAAHALGLTAVISSSIESSLGLTQLARIAAWLTPDTIPGLDTLDLMQAQQVRRWPGSPLPLVDADVLEQLL.

Catalysis depends on K133, which acts as the Proton donor. Positions 161, 190, and 213 each coordinate Mg(2+). K235 functions as the Proton acceptor in the catalytic mechanism.

It belongs to the mandelate racemase/muconate lactonizing enzyme family. MenC type 1 subfamily. A divalent metal cation is required as a cofactor.

The catalysed reaction is (1R,6R)-6-hydroxy-2-succinyl-cyclohexa-2,4-diene-1-carboxylate = 2-succinylbenzoate + H2O. Its pathway is quinol/quinone metabolism; 1,4-dihydroxy-2-naphthoate biosynthesis; 1,4-dihydroxy-2-naphthoate from chorismate: step 4/7. It functions in the pathway quinol/quinone metabolism; menaquinone biosynthesis. Converts 2-succinyl-6-hydroxy-2,4-cyclohexadiene-1-carboxylate (SHCHC) to 2-succinylbenzoate (OSB). The sequence is that of o-succinylbenzoate synthase from Shigella sonnei (strain Ss046).